Here is an 860-residue protein sequence, read N- to C-terminus: uncharacterized protein (860 aa).

Composition is skewed to basic and acidic residues over residues 334-345 (LEKKSLQSDSKN) and 536-551 (EDQK…LSDK). 4 disordered regions span residues 334–360 (LEKK…LRKE), 530–551 (EEDD…LSDK), 708–798 (ARKT…EDEF), and 813–842 (PFNE…RKAI). 3 stretches are compositionally biased toward acidic residues: residues 716–725 (DEEGEIDEDE), 738–750 (EMDE…DSEE), and 813–824 (PFNETDDEEEIQ). A phosphoserine mark is found at Ser-744 and Ser-748.

The protein belongs to the CBF/MAK21 family.

This is an uncharacterized protein from Schizosaccharomyces pombe (strain 972 / ATCC 24843) (Fission yeast).